The sequence spans 241 residues: Phosphoribosylaminoimidazole-succinocarboxamide synthase (241 aa).

Belongs to the SAICAR synthetase family.

The enzyme catalyses 5-amino-1-(5-phospho-D-ribosyl)imidazole-4-carboxylate + L-aspartate + ATP = (2S)-2-[5-amino-1-(5-phospho-beta-D-ribosyl)imidazole-4-carboxamido]succinate + ADP + phosphate + 2 H(+). It participates in purine metabolism; IMP biosynthesis via de novo pathway; 5-amino-1-(5-phospho-D-ribosyl)imidazole-4-carboxamide from 5-amino-1-(5-phospho-D-ribosyl)imidazole-4-carboxylate: step 1/2. In Bacillus subtilis (strain 168), this protein is Phosphoribosylaminoimidazole-succinocarboxamide synthase (purC).